The chain runs to 668 residues: Golgin candidate 2 (668 aa).

Positions 22 to 317 (QAADSLRKDE…RQREERRRRR (296 aa)) are disordered. Residues 26–39 (SLRKDEKSETHDEV) show a composition bias toward basic and acidic residues. 2 stretches are compositionally biased toward polar residues: residues 64–86 (GSDSGSGSQRNSTEQKPSYLSSS) and 100–113 (SAPSQSLTQDNTKL). Composition is skewed to low complexity over residues 123–141 (STPNQRTSTSTSRSPGGTS) and 168–178 (SSSSNVVNSRG). 3 stretches are compositionally biased toward basic and acidic residues: residues 184–207 (TNKEPSDKEVSSPSDADMKNRNAP), 215–237 (THKESEKDVSGKTPPLDDSRRSA), and 250–259 (GKRDGRESRR). Residues 290 to 302 (DESESDYESDSST) show a composition bias toward acidic residues. The span at 303–312 (DSERERQREE) shows a compositional bias: basic and acidic residues. A coiled-coil region spans residues 331-539 (AVIKERENMV…SQVEALSSEK (209 aa)). Helical transmembrane passes span 594 to 614 (KHLGWLVMQLNAIFISGTVFL) and 622 to 642 (IWAVVYLVCLHLWVLYILLSH).

It is found in the golgi apparatus membrane. In terms of biological role, golgi matrix protein playing a role in tethering of vesicles to Golgi membranes and in maintaining the overall structure of the Golgi apparatus. The chain is Golgin candidate 2 (GC2) from Arabidopsis thaliana (Mouse-ear cress).